A 391-amino-acid chain; its full sequence is S-adenosylmethionine synthase (391 aa).

Residues 1 to 20 (MPRSDYLFTSESVSEGHPDK) are disordered. H17 provides a ligand contact to ATP. D19 is a binding site for Mg(2+). K(+) is bound at residue E45. L-methionine contacts are provided by E58 and Q102. Residues 102-112 (QSADIAQGVDA) form a flexible loop region. ATP contacts are provided by residues 169–171 (DAK), 235–236 (KF), D244, 250–251 (RK), A267, and K271. D244 is a binding site for L-methionine. K275 is a binding site for L-methionine.

The protein belongs to the AdoMet synthase family. In terms of assembly, homotetramer; dimer of dimers. Requires Mg(2+) as cofactor. K(+) is required as a cofactor.

It localises to the cytoplasm. The catalysed reaction is L-methionine + ATP + H2O = S-adenosyl-L-methionine + phosphate + diphosphate. The protein operates within amino-acid biosynthesis; S-adenosyl-L-methionine biosynthesis; S-adenosyl-L-methionine from L-methionine: step 1/1. Catalyzes the formation of S-adenosylmethionine (AdoMet) from methionine and ATP. The overall synthetic reaction is composed of two sequential steps, AdoMet formation and the subsequent tripolyphosphate hydrolysis which occurs prior to release of AdoMet from the enzyme. This is S-adenosylmethionine synthase from Methylorubrum extorquens (strain CM4 / NCIMB 13688) (Methylobacterium extorquens).